A 737-amino-acid polypeptide reads, in one-letter code: Catalase-peroxidase (737 aa).

The tryptophyl-tyrosyl-methioninium (Trp-Tyr) (with M-251) cross-link spans 102–225 (WHSAGTYRTG…LGAVQMGLIY (124 aa)). Residue histidine 103 is the Proton acceptor of the active site. The tryptophyl-tyrosyl-methioninium (Tyr-Met) (with W-102) cross-link spans 225-251 (YVNPEGPNGKPDPLAAAHDIRETFARM). Histidine 266 is a binding site for heme b.

Belongs to the peroxidase family. Peroxidase/catalase subfamily. As to quaternary structure, homodimer or homotetramer. Heme b is required as a cofactor. Post-translationally, formation of the three residue Trp-Tyr-Met cross-link is important for the catalase, but not the peroxidase activity of the enzyme.

It carries out the reaction H2O2 + AH2 = A + 2 H2O. It catalyses the reaction 2 H2O2 = O2 + 2 H2O. Functionally, bifunctional enzyme with both catalase and broad-spectrum peroxidase activity. This chain is Catalase-peroxidase, found in Caulobacter sp. (strain K31).